We begin with the raw amino-acid sequence, 355 residues long: Adenine deaminase (355 aa).

Zn(2+) contacts are provided by His-24, His-26, and His-204. Glu-207 (proton donor) is an active-site residue. Zn(2+) is bound at residue Asp-285. Residue Asp-286 coordinates substrate.

Belongs to the metallo-dependent hydrolases superfamily. Adenosine and AMP deaminases family. Adenine deaminase type 2 subfamily. Requires Zn(2+) as cofactor.

The enzyme catalyses adenine + H2O + H(+) = hypoxanthine + NH4(+). Catalyzes the hydrolytic deamination of adenine to hypoxanthine. Plays an important role in the purine salvage pathway and in nitrogen catabolism. This chain is Adenine deaminase, found in Geotalea uraniireducens (strain Rf4) (Geobacter uraniireducens).